Here is a 290-residue protein sequence, read N- to C-terminus: Lipoyl synthase (290 aa).

[4Fe-4S] cluster-binding residues include C44, C49, C55, C70, C74, C77, and S282. The region spanning 56-271 (WGEGTATFMI…ELLGKEMGFR (216 aa)) is the Radical SAM core domain.

The protein belongs to the radical SAM superfamily. Lipoyl synthase family. Requires [4Fe-4S] cluster as cofactor.

Its subcellular location is the cytoplasm. The enzyme catalyses [[Fe-S] cluster scaffold protein carrying a second [4Fe-4S](2+) cluster] + N(6)-octanoyl-L-lysyl-[protein] + 2 oxidized [2Fe-2S]-[ferredoxin] + 2 S-adenosyl-L-methionine + 4 H(+) = [[Fe-S] cluster scaffold protein] + N(6)-[(R)-dihydrolipoyl]-L-lysyl-[protein] + 4 Fe(3+) + 2 hydrogen sulfide + 2 5'-deoxyadenosine + 2 L-methionine + 2 reduced [2Fe-2S]-[ferredoxin]. It participates in protein modification; protein lipoylation via endogenous pathway; protein N(6)-(lipoyl)lysine from octanoyl-[acyl-carrier-protein]: step 2/2. Functionally, catalyzes the radical-mediated insertion of two sulfur atoms into the C-6 and C-8 positions of the octanoyl moiety bound to the lipoyl domains of lipoate-dependent enzymes, thereby converting the octanoylated domains into lipoylated derivatives. This Flavobacterium psychrophilum (strain ATCC 49511 / DSM 21280 / CIP 103535 / JIP02/86) protein is Lipoyl synthase.